Consider the following 350-residue polypeptide: Protein RecA (350 aa).

67 to 74 (GPESSGKT) is a binding site for ATP.

It belongs to the RecA family.

The protein resides in the cytoplasm. Can catalyze the hydrolysis of ATP in the presence of single-stranded DNA, the ATP-dependent uptake of single-stranded DNA by duplex DNA, and the ATP-dependent hybridization of homologous single-stranded DNAs. It interacts with LexA causing its activation and leading to its autocatalytic cleavage. In Chromobacterium violaceum (strain ATCC 12472 / DSM 30191 / JCM 1249 / CCUG 213 / NBRC 12614 / NCIMB 9131 / NCTC 9757 / MK), this protein is Protein RecA.